Here is a 162-residue protein sequence, read N- to C-terminus: NADH-quinone oxidoreductase subunit I (162 aa).

2 consecutive 4Fe-4S ferredoxin-type domains span residues 52–82 (LRRY…IEAG) and 93–122 (VRYD…EGPN). 8 residues coordinate [4Fe-4S] cluster: C62, C65, C68, C72, C102, C105, C108, and C112.

The protein belongs to the complex I 23 kDa subunit family. As to quaternary structure, NDH-1 is composed of 14 different subunits. Subunits NuoA, H, J, K, L, M, N constitute the membrane sector of the complex. Requires [4Fe-4S] cluster as cofactor.

Its subcellular location is the cell inner membrane. The enzyme catalyses a quinone + NADH + 5 H(+)(in) = a quinol + NAD(+) + 4 H(+)(out). NDH-1 shuttles electrons from NADH, via FMN and iron-sulfur (Fe-S) centers, to quinones in the respiratory chain. The immediate electron acceptor for the enzyme in this species is believed to be ubiquinone. Couples the redox reaction to proton translocation (for every two electrons transferred, four hydrogen ions are translocated across the cytoplasmic membrane), and thus conserves the redox energy in a proton gradient. The polypeptide is NADH-quinone oxidoreductase subunit I (Bradyrhizobium sp. (strain BTAi1 / ATCC BAA-1182)).